An 86-amino-acid chain; its full sequence is Small ribosomal subunit protein uS17 (86 aa).

Belongs to the universal ribosomal protein uS17 family. As to quaternary structure, part of the 30S ribosomal subunit.

One of the primary rRNA binding proteins, it binds specifically to the 5'-end of 16S ribosomal RNA. The chain is Small ribosomal subunit protein uS17 from Helicobacter acinonychis (strain Sheeba).